Consider the following 285-residue polypeptide: Bifunctional protein FolD (285 aa).

NADP(+)-binding positions include 165–167 (GRS) and Ser-190.

It belongs to the tetrahydrofolate dehydrogenase/cyclohydrolase family. Homodimer.

It carries out the reaction (6R)-5,10-methylene-5,6,7,8-tetrahydrofolate + NADP(+) = (6R)-5,10-methenyltetrahydrofolate + NADPH. The enzyme catalyses (6R)-5,10-methenyltetrahydrofolate + H2O = (6R)-10-formyltetrahydrofolate + H(+). It functions in the pathway one-carbon metabolism; tetrahydrofolate interconversion. Catalyzes the oxidation of 5,10-methylenetetrahydrofolate to 5,10-methenyltetrahydrofolate and then the hydrolysis of 5,10-methenyltetrahydrofolate to 10-formyltetrahydrofolate. This is Bifunctional protein FolD from Ligilactobacillus salivarius (strain UCC118) (Lactobacillus salivarius).